A 203-amino-acid chain; its full sequence is MADQQEKDQKLKKQQRSNATIAFACLSFFVCMIGAAYASVPLYRIFCQVTGYGGTTQRVEQYSDTILDKTIKVRFDANTANGLAWDFKPVQREVTVRIGETTMIKYEARNLFDQPTYGRASFNVAPGRAGAYFNKVECFCFTDTTLQPGEDMEMPVVFFVDPEIVNDPDLKDVKTITLSYTFFPIEKPKPVANVKAETPTNGS.

Residues 1-16 (MADQQEKDQKLKKQQR) lie on the Cytoplasmic side of the membrane. Residues 17–39 (SNATIAFACLSFFVCMIGAAYAS) form a helical; Signal-anchor for type II membrane protein membrane-spanning segment. At 40-203 (VPLYRIFCQV…VKAETPTNGS (164 aa)) the chain is on the periplasmic side.

The protein belongs to the COX11/CtaG family.

The protein localises to the cell inner membrane. Functionally, exerts its effect at some terminal stage of cytochrome c oxidase synthesis, probably by being involved in the insertion of the copper B into subunit I. This chain is Cytochrome c oxidase assembly protein CtaG, found in Brucella anthropi (strain ATCC 49188 / DSM 6882 / CCUG 24695 / JCM 21032 / LMG 3331 / NBRC 15819 / NCTC 12168 / Alc 37) (Ochrobactrum anthropi).